Here is a 328-residue protein sequence, read N- to C-terminus: Malate dehydrogenase (328 aa).

An NAD(+)-binding site is contributed by 11 to 17 (GAAGQIG). The substrate site is built by arginine 94 and arginine 100. Residues asparagine 107, glutamine 114, and 131 to 133 (VGN) each bind NAD(+). 2 residues coordinate substrate: asparagine 133 and arginine 164. Histidine 189 serves as the catalytic Proton acceptor.

The protein belongs to the LDH/MDH superfamily. MDH type 2 family.

The catalysed reaction is (S)-malate + NAD(+) = oxaloacetate + NADH + H(+). Its function is as follows. Catalyzes the reversible oxidation of malate to oxaloacetate. This chain is Malate dehydrogenase, found in Stenotrophomonas maltophilia (strain R551-3).